Here is a 207-residue protein sequence, read N- to C-terminus: MKDLTAKQRSVLIFIEEFIEKNGYPPSVREIARRFRITPRGAQLHLVALEKKGYIERKNGKPRAMRVTKSVKNRVPLIGEIRAGEKKEAIEYLEDYIEVPGSFLSSGYEHFLLRVKGESMIEEHICDGDLVLIRRQDWAQNGDIVAAMVEGEVTLKKFFQRGEMVELRPANKEMSPMFFRADRVKILGKVVGVFRKYEGGRTCFLTR.

The segment at residues 28–47 (VREIARRFRITPRGAQLHLV) is a DNA-binding region (H-T-H motif). Catalysis depends on for autocatalytic cleavage activity residues serine 119 and lysine 156.

The protein belongs to the peptidase S24 family. As to quaternary structure, homodimer.

The catalysed reaction is Hydrolysis of Ala-|-Gly bond in repressor LexA.. Its function is as follows. Represses a number of genes involved in the response to DNA damage (SOS response), including recA and lexA. In the presence of single-stranded DNA, RecA interacts with LexA causing an autocatalytic cleavage which disrupts the DNA-binding part of LexA, leading to derepression of the SOS regulon and eventually DNA repair. In Thermotoga neapolitana (strain ATCC 49049 / DSM 4359 / NBRC 107923 / NS-E), this protein is LexA repressor.